The following is a 726-amino-acid chain: Catalase-peroxidase (726 aa).

Polar residues predominate over residues Met-1–Ser-13. Residues Met-1–Arg-34 form a disordered region. Residues Trp-105 to Tyr-226 constitute a cross-link (tryptophyl-tyrosyl-methioninium (Trp-Tyr) (with M-252)). The active-site Proton acceptor is His-106. The segment at residues Tyr-226–Met-252 is a cross-link (tryptophyl-tyrosyl-methioninium (Tyr-Met) (with W-105)). Residue His-267 coordinates heme b.

The protein belongs to the peroxidase family. Peroxidase/catalase subfamily. Homodimer or homotetramer. The cofactor is heme b. In terms of processing, formation of the three residue Trp-Tyr-Met cross-link is important for the catalase, but not the peroxidase activity of the enzyme.

The catalysed reaction is H2O2 + AH2 = A + 2 H2O. It carries out the reaction 2 H2O2 = O2 + 2 H2O. Functionally, bifunctional enzyme with both catalase and broad-spectrum peroxidase activity. The polypeptide is Catalase-peroxidase (Enterobacter sp. (strain 638)).